The primary structure comprises 578 residues: Monooxygenase cfoE (578 aa).

Residues Ile549 to Phe569 traverse the membrane as a helical segment.

It belongs to the FMO family. The cofactor is FAD.

The protein resides in the membrane. It functions in the pathway secondary metabolite biosynthesis; flavonoid biosynthesis. Functionally, monooxygenase; part of the gene cluster that mediates the biosynthesis of chlorflavonin, a fungal flavonoid with acetolactate synthase inhibitory activity. Within the pathway, cfoE is responsible for the chlorination of the flavonoid skeleton at position C3'. The pathway begins with the PKS-NRPS hybrid synthetase cfoA that uses benzoic acid or p-hydroxybenzoic acid as a starter unit with four rounds of chain elongation using malonyl-CoA to form the chalcone skeleton. Then, a new type of chalcone isomerase, cfoK, catalyzes the conversion of the chalcone into a flavanone by a histidine-mediated oxa-Michael addition mechanism. The desaturation of flavanone to flavone is catalyzed by a new type of flavone synthase, the flavin mononucleotide (FMN)-dependent oxidoreductase cfoJ. Monooxygenases cfoF, cfoG, and P450 cfoH are responsible for the hydroxylation of the flavonoid skeleton at sites C3, C8, and C2', respectively. Like cfoF, the dehydratase cfoI plays also a role in the hydroxylation of position C3. Methyltransferases cfoB, cfoC, and cfoD then catalyze the methylation of C7-OH, C8-OH, and C3-OH, respectively. Finally, the monooxygenase cfoE is responsible for the chlorination of flavonoid at position C3'. The polypeptide is Monooxygenase cfoE (Aspergillus candidus).